The following is a 280-amino-acid chain: Small ribosomal subunit protein uS3 (280 aa).

One can recognise a KH type-2 domain in the interval 38–106 (IRKLLATGLE…QVQLNILEVK (69 aa)). The segment at 216 to 280 (AAAPAADRPR…SAGQPETTES (65 aa)) is disordered. Residues 237–270 (SGASGTTATSTDAGRAASEGTVEAPATEAAATAP) are compositionally biased toward low complexity.

It belongs to the universal ribosomal protein uS3 family. In terms of assembly, part of the 30S ribosomal subunit. Forms a tight complex with proteins S10 and S14.

Functionally, binds the lower part of the 30S subunit head. Binds mRNA in the 70S ribosome, positioning it for translation. This chain is Small ribosomal subunit protein uS3, found in Mycolicibacterium vanbaalenii (strain DSM 7251 / JCM 13017 / BCRC 16820 / KCTC 9966 / NRRL B-24157 / PYR-1) (Mycobacterium vanbaalenii).